We begin with the raw amino-acid sequence, 590 residues long: Arginine--tRNA ligase (590 aa).

A 'HIGH' region motif is present at residues 134–144; sequence ANPTGPMHVGH.

The protein belongs to the class-I aminoacyl-tRNA synthetase family. Monomer.

It localises to the cytoplasm. It carries out the reaction tRNA(Arg) + L-arginine + ATP = L-arginyl-tRNA(Arg) + AMP + diphosphate. In Beijerinckia indica subsp. indica (strain ATCC 9039 / DSM 1715 / NCIMB 8712), this protein is Arginine--tRNA ligase.